Consider the following 63-residue polypeptide: Large ribosomal subunit protein bL28 (63 aa).

Belongs to the bacterial ribosomal protein bL28 family.

The chain is Large ribosomal subunit protein bL28 from Geotalea uraniireducens (strain Rf4) (Geobacter uraniireducens).